A 74-amino-acid chain; its full sequence is Putative membrane protein insertion efficiency factor (74 aa).

Belongs to the UPF0161 family.

The protein localises to the cell membrane. Functionally, could be involved in insertion of integral membrane proteins into the membrane. This Bacillus pumilus (strain SAFR-032) protein is Putative membrane protein insertion efficiency factor.